Reading from the N-terminus, the 368-residue chain is Serine/threonine-protein kinase CAK1 (368 aa).

A Protein kinase domain is found at 1–368 (MKLDSIDITH…QRILQELEKP (368 aa)). The Proton acceptor role is filled by Asp156.

This sequence belongs to the protein kinase superfamily. CMGC Ser/Thr protein kinase family. CDC2/CDKX subfamily.

It carries out the reaction L-seryl-[protein] + ATP = O-phospho-L-seryl-[protein] + ADP + H(+). It catalyses the reaction L-threonyl-[protein] + ATP = O-phospho-L-threonyl-[protein] + ADP + H(+). In Saccharomyces cerevisiae (strain ATCC 204508 / S288c) (Baker's yeast), this protein is Serine/threonine-protein kinase CAK1 (CAK1).